Reading from the N-terminus, the 82-residue chain is Omega-conotoxin-like TxO6 (82 aa).

Positions 1-22 are cleaved as a signal peptide; the sequence is MKLTCVVIVAVLFLTAWTLVMA. Positions 23–50 are excised as a propeptide; it reads DDSNNGLANLFSKSRDEMEDPEAAKLEK. 3 cysteine pairs are disulfide-bonded: Cys-53–Cys-71, Cys-60–Cys-76, and Cys-70–Cys-81.

This sequence belongs to the conotoxin O1 superfamily. As to expression, expressed by the venom duct.

The protein localises to the secreted. Its function is as follows. Omega-conotoxins act at presynaptic membranes, they bind and block voltage-gated calcium channels (Cav). In Conus textile (Cloth-of-gold cone), this protein is Omega-conotoxin-like TxO6.